The primary structure comprises 357 residues: Cobalt-precorrin-5B C(1)-methyltransferase (357 aa).

The protein belongs to the CbiD family.

The enzyme catalyses Co-precorrin-5B + S-adenosyl-L-methionine = Co-precorrin-6A + S-adenosyl-L-homocysteine. It functions in the pathway cofactor biosynthesis; adenosylcobalamin biosynthesis; cob(II)yrinate a,c-diamide from sirohydrochlorin (anaerobic route): step 6/10. Catalyzes the methylation of C-1 in cobalt-precorrin-5B to form cobalt-precorrin-6A. The chain is Cobalt-precorrin-5B C(1)-methyltransferase from Paramagnetospirillum magneticum (strain ATCC 700264 / AMB-1) (Magnetospirillum magneticum).